The sequence spans 154 residues: Ribonuclease H (154 aa).

Residues 5–146 (EQNIVYLYCD…ADELANRGID (142 aa)) form the RNase H type-1 domain. Residues aspartate 14, glutamate 52, aspartate 74, and aspartate 138 each contribute to the Mg(2+) site.

Belongs to the RNase H family. Monomer. Mg(2+) is required as a cofactor.

The protein resides in the cytoplasm. The enzyme catalyses Endonucleolytic cleavage to 5'-phosphomonoester.. Its function is as follows. Endonuclease that specifically degrades the RNA of RNA-DNA hybrids. In Coxiella burnetii (strain RSA 331 / Henzerling II), this protein is Ribonuclease H.